The following is a 511-amino-acid chain: 2-isopropylmalate synthase (511 aa).

The 263-residue stretch at Ile4–Lys266 folds into the Pyruvate carboxyltransferase domain. Residues Asp13, His201, His203, and Asn237 each contribute to the Mn(2+) site. A regulatory domain region spans residues Glu392–Val511.

This sequence belongs to the alpha-IPM synthase/homocitrate synthase family. LeuA type 1 subfamily. In terms of assembly, homodimer. Mn(2+) is required as a cofactor.

The protein localises to the cytoplasm. The catalysed reaction is 3-methyl-2-oxobutanoate + acetyl-CoA + H2O = (2S)-2-isopropylmalate + CoA + H(+). Its pathway is amino-acid biosynthesis; L-leucine biosynthesis; L-leucine from 3-methyl-2-oxobutanoate: step 1/4. Its function is as follows. Catalyzes the condensation of the acetyl group of acetyl-CoA with 3-methyl-2-oxobutanoate (2-ketoisovalerate) to form 3-carboxy-3-hydroxy-4-methylpentanoate (2-isopropylmalate). This is 2-isopropylmalate synthase from Lysinibacillus sphaericus (strain C3-41).